A 185-amino-acid polypeptide reads, in one-letter code: Ribosome-recycling factor (185 aa).

The protein belongs to the RRF family.

It is found in the cytoplasm. Responsible for the release of ribosomes from messenger RNA at the termination of protein biosynthesis. May increase the efficiency of translation by recycling ribosomes from one round of translation to another. The polypeptide is Ribosome-recycling factor (Oceanobacillus iheyensis (strain DSM 14371 / CIP 107618 / JCM 11309 / KCTC 3954 / HTE831)).